Consider the following 383-residue polypeptide: Putative transcription factor 282R (383 aa).

This sequence belongs to the IIV-6 282R family.

Its function is as follows. Transcription activation. The protein is Putative transcription factor 282R of Acheta domesticus (House cricket).